The primary structure comprises 647 residues: Neutral endopeptidase (647 aa).

The Peptidase M13 domain occupies 1 to 647 (MRRYLAVRGG…LDPEDRITIW (647 aa)). His-496 contacts Zn(2+). Residue Glu-497 is part of the active site. Zn(2+) is bound by residues His-500 and Glu-556. Asp-560 acts as the Proton donor in catalysis.

Belongs to the peptidase M13 family. Zn(2+) serves as cofactor.

This chain is Neutral endopeptidase (pepO), found in Lactobacillus helveticus (Lactobacillus suntoryeus).